The following is a 904-amino-acid chain: Nitrate reductase [NADH] 1 (904 aa).

Composition is skewed to polar residues over residues 1 to 10 and 39 to 50; these read MAASVENRQF and STNFQKKPNSTI. Residues 1 to 65 form a disordered region; that stretch reads MAASVENRQF…SSEDDDDDDE (65 aa). Acidic residues predominate over residues 56 to 65; the sequence is SSEDDDDDDE. Position 183 (C183) interacts with Mo-molybdopterin. One can recognise a Cytochrome b5 heme-binding domain in the interval 531 to 606; the sequence is SKMYSMSEVR…LEEFRIGELL (76 aa). H566 and H589 together coordinate heme. The region spanning 647–759 is the FAD-binding FR-type domain; the sequence is REKIPCKLID…KGPLGHIEYQ (113 aa). Residues 699-702, 716-720, F721, F728, 733-735, and T786 each bind FAD; these read RAYT, VVKIY, and QMS.

It belongs to the nitrate reductase family. As to quaternary structure, homodimer. FAD serves as cofactor. Heme is required as a cofactor. It depends on Mo-molybdopterin as a cofactor.

It carries out the reaction nitrite + NAD(+) + H2O = nitrate + NADH + H(+). Its activity is regulated as follows. Regulated by the nitrogen source and controlled by the circadian rhythm. Functionally, nitrate reductase is a key enzyme involved in the first step of nitrate assimilation in plants, fungi and bacteria. This chain is Nitrate reductase [NADH] 1 (NIA1), found in Nicotiana tabacum (Common tobacco).